The primary structure comprises 584 residues: UvrABC system protein C (584 aa).

A GIY-YIG domain is found at 12–89 (NKPGCYLFFN…IKKYHPKYNV (78 aa)). A UVR domain is found at 194 to 229 (NQVKQTLVKQMQKASDNLQFEQAQRIKDQITSLDFI).

It belongs to the UvrC family. In terms of assembly, interacts with UvrB in an incision complex.

The protein resides in the cytoplasm. Its function is as follows. The UvrABC repair system catalyzes the recognition and processing of DNA lesions. UvrC both incises the 5' and 3' sides of the lesion. The N-terminal half is responsible for the 3' incision and the C-terminal half is responsible for the 5' incision. This Mycoplasma mycoides subsp. mycoides SC (strain CCUG 32753 / NCTC 10114 / PG1) protein is UvrABC system protein C.